The following is a 199-amino-acid chain: FMN-dependent NADH:quinone oxidoreductase (199 aa).

FMN contacts are provided by residues Ser9 and 95-98 (MYNF).

This sequence belongs to the azoreductase type 1 family. In terms of assembly, homodimer. It depends on FMN as a cofactor.

It catalyses the reaction 2 a quinone + NADH + H(+) = 2 a 1,4-benzosemiquinone + NAD(+). The catalysed reaction is N,N-dimethyl-1,4-phenylenediamine + anthranilate + 2 NAD(+) = 2-(4-dimethylaminophenyl)diazenylbenzoate + 2 NADH + 2 H(+). Its function is as follows. Quinone reductase that provides resistance to thiol-specific stress caused by electrophilic quinones. Also exhibits azoreductase activity. Catalyzes the reductive cleavage of the azo bond in aromatic azo compounds to the corresponding amines. The chain is FMN-dependent NADH:quinone oxidoreductase from Dechloromonas aromatica (strain RCB).